Here is a 213-residue protein sequence, read N- to C-terminus: MKKGFFITIEGPDGAGKTSLLDNLMPALRDIFGDNLIETREPGGVRISEAIRKIVLGLKYPEMNRRTEALLFAAARAQHMVEKIEPALADGKIVLSDRFVDSSIAYQGGGRELGIEAVGEINNFATNGLQPNLTLLLDLPSEVGIARIMKHRSDEVNRLDKDRLVFHKKVRQTYLQLAKDQPNRIKVLDATQSPEKIAINALQLIQESLKGWI.

Position 11–18 (11–18 (GPDGAGKT)) interacts with ATP.

It belongs to the thymidylate kinase family.

The enzyme catalyses dTMP + ATP = dTDP + ADP. Its function is as follows. Phosphorylation of dTMP to form dTDP in both de novo and salvage pathways of dTTP synthesis. This Oenococcus oeni (strain ATCC BAA-331 / PSU-1) protein is Thymidylate kinase.